The sequence spans 607 residues: Phosphogluconate dehydratase (607 aa).

[4Fe-4S] cluster contacts are provided by C156 and C223.

Belongs to the IlvD/Edd family. The cofactor is [4Fe-4S] cluster.

It catalyses the reaction 6-phospho-D-gluconate = 2-dehydro-3-deoxy-6-phospho-D-gluconate + H2O. The protein operates within carbohydrate metabolism; Entner-Doudoroff pathway. In terms of biological role, catalyzes the dehydration of 6-phospho-D-gluconate to 2-dehydro-3-deoxy-6-phospho-D-gluconate. The protein is Phosphogluconate dehydratase of Zymomonas mobilis subsp. mobilis (strain ATCC 31821 / ZM4 / CP4).